The sequence spans 182 residues: MSRSKKSRKPGTNSNDQLVVVRTRSESELESRLRKKLKKRKGLKSGSRHSEGSESQVRQAAQKRDPRLGSKKPIPLIVAEPKKLNKQERKLAAEQELAMLEKDAQLNVLLDRLDNGEKLGIGLQKYVDEKLDRIEVLMEQLGLLDDEPEPAPAPQSKPTKKRKTEDDLLSEFEQLDVDKYQD.

2 disordered regions span residues 1–79 (MSRS…LIVA) and 143–182 (LLDDEPEPAPAPQSKPTKKRKTEDDLLSEFEQLDVDKYQD). Residues 23–32 (TRSESELESR) are compositionally biased toward basic and acidic residues. Over residues 33–47 (LRKKLKKRKGLKSGS) the composition is skewed to basic residues.

It belongs to the YihI family. In terms of assembly, interacts with Der.

In terms of biological role, a GTPase-activating protein (GAP) that modifies Der/EngA GTPase function. May play a role in ribosome biogenesis. This Vibrio cholerae serotype O1 (strain ATCC 39541 / Classical Ogawa 395 / O395) protein is Der GTPase-activating protein YihI.